Reading from the N-terminus, the 130-residue chain is Small ribosomal subunit protein uS9 (130 aa).

This sequence belongs to the universal ribosomal protein uS9 family.

The polypeptide is Small ribosomal subunit protein uS9 (Clostridioides difficile (strain 630) (Peptoclostridium difficile)).